The following is a 70-amino-acid chain: Delta-hexatoxin-Mg1b (70 aa).

The N-terminal stretch at 1–26 (MKILEKALLENDSAAEEESRNLRTKR) is a signal peptide. Cystine bridges form between cysteine 27–cysteine 41, cysteine 34–cysteine 46, cysteine 40–cysteine 57, and cysteine 42–cysteine 68.

In terms of tissue distribution, expressed by the venom gland.

It localises to the secreted. Inhibits tetrodotoxin-sensitive sodium channels (Nav). Intracranial injection into mice causes strong convulsions and death. Intrathorax injection into crickets causes paralysis prolonged for 2 minutes, followed by recovery. The protein is Delta-hexatoxin-Mg1b of Macrothele gigas (Japanese funnel web spider).